The chain runs to 509 residues: Lanosterol 14-alpha demethylase (509 aa).

Residues 30–50 traverse the membrane as a helical segment; that stretch reads GNLLSMLLIACAFTLSLVYLF. Cysteine 455 is a heme binding site.

Belongs to the cytochrome P450 family. Heme serves as cofactor. Ubiquitinated by MARCHF6, leading to proteasomal degradation.

It localises to the endoplasmic reticulum membrane. The protein resides in the microsome membrane. It catalyses the reaction a 14alpha-methyl steroid + 3 reduced [NADPH--hemoprotein reductase] + 3 O2 = a Delta(14) steroid + formate + 3 oxidized [NADPH--hemoprotein reductase] + 4 H2O + 4 H(+). The enzyme catalyses lanosterol + 3 reduced [NADPH--hemoprotein reductase] + 3 O2 = 4,4-dimethyl-5alpha-cholesta-8,14,24-trien-3beta-ol + formate + 3 oxidized [NADPH--hemoprotein reductase] + 4 H2O + 4 H(+). The catalysed reaction is 24,25-dihydrolanosterol + 3 reduced [NADPH--hemoprotein reductase] + 3 O2 = 4,4-dimethyl-8,14-cholestadien-3beta-ol + formate + 3 oxidized [NADPH--hemoprotein reductase] + 4 H2O + 4 H(+). It carries out the reaction a 14alpha-methyl steroid + reduced [NADPH--hemoprotein reductase] + O2 = a 14alpha-hydroxymethyl steroid + oxidized [NADPH--hemoprotein reductase] + H2O + H(+). It catalyses the reaction a 14alpha-hydroxymethyl steroid + reduced [NADPH--hemoprotein reductase] + O2 = a 14alpha-formyl steroid + oxidized [NADPH--hemoprotein reductase] + 2 H2O + H(+). The enzyme catalyses a 14alpha-formyl steroid + reduced [NADPH--hemoprotein reductase] + O2 = a Delta(14) steroid + formate + oxidized [NADPH--hemoprotein reductase] + H2O + 2 H(+). The catalysed reaction is lanosterol + reduced [NADPH--hemoprotein reductase] + O2 = 32-hydroxylanosterol + oxidized [NADPH--hemoprotein reductase] + H2O + H(+). It carries out the reaction 32-hydroxylanosterol + reduced [NADPH--hemoprotein reductase] + O2 = 32-oxolanosterol + oxidized [NADPH--hemoprotein reductase] + 2 H2O + H(+). It catalyses the reaction 32-oxolanosterol + reduced [NADPH--hemoprotein reductase] + O2 = 4,4-dimethyl-5alpha-cholesta-8,14,24-trien-3beta-ol + formate + oxidized [NADPH--hemoprotein reductase] + H2O + 2 H(+). The enzyme catalyses 24,25-dihydrolanosterol + reduced [NADPH--hemoprotein reductase] + O2 = 32-hydroxy-24,25-dihydrolanosterol + oxidized [NADPH--hemoprotein reductase] + H2O + H(+). The catalysed reaction is 32-hydroxy-24,25-dihydrolanosterol + reduced [NADPH--hemoprotein reductase] + O2 = 32-oxo-24,25-dihydrolanosterol + oxidized [NADPH--hemoprotein reductase] + 2 H2O + H(+). It carries out the reaction 32-oxo-24,25-dihydrolanosterol + reduced [NADPH--hemoprotein reductase] + O2 = 4,4-dimethyl-8,14-cholestadien-3beta-ol + formate + oxidized [NADPH--hemoprotein reductase] + H2O + 2 H(+). It functions in the pathway steroid biosynthesis; zymosterol biosynthesis; zymosterol from lanosterol: step 1/6. Inhibited by azalanstat. Inhibited by azole antifungal agents ketoconazole, itraconazole and fluconazole. Its function is as follows. Sterol 14alpha-demethylase that plays a critical role in the cholesterol biosynthesis pathway, being cholesterol the major sterol component in mammalian membranes as well as a precursor for bile acid and steroid hormone synthesis. Cytochrome P450 monooxygenase that catalyzes the three-step oxidative removal of the 14alpha-methyl group (C-32) of sterols such as lanosterol (lanosta-8,24-dien-3beta-ol) and 24,25-dihydrolanosterol (DHL) in the form of formate, and converts the sterols to 4,4-dimethyl-5alpha-cholesta-8,14,24-trien-3beta-ol and 4,4-dimethyl-8,14-cholestadien-3beta-ol, respectively, which are intermediates of cholesterol biosynthesis. Can also demethylate substrates not intrinsic to mammals, such as eburicol (24-methylene-24,25-dihydrolanosterol), but at a lower rate than DHL. The chain is Lanosterol 14-alpha demethylase from Pongo abelii (Sumatran orangutan).